Consider the following 324-residue polypeptide: tRNA-modifying protein YgfZ (324 aa).

W184 contacts folate.

It belongs to the tRNA-modifying YgfZ family.

It localises to the cytoplasm. Folate-binding protein involved in regulating the level of ATP-DnaA and in the modification of some tRNAs. It is probably a key factor in regulatory networks that act via tRNA modification, such as initiation of chromosomal replication. The sequence is that of tRNA-modifying protein YgfZ from Vibrio vulnificus (strain CMCP6).